The primary structure comprises 211 residues: Small ribosomal subunit protein uS4 (211 aa).

The region spanning 99–160 is the S4 RNA-binding domain; it reads RRLDSVVYQM…KSRNIQQVRE (62 aa).

This sequence belongs to the universal ribosomal protein uS4 family. In terms of assembly, part of the 30S ribosomal subunit. Contacts protein S5. The interaction surface between S4 and S5 is involved in control of translational fidelity.

In terms of biological role, one of the primary rRNA binding proteins, it binds directly to 16S rRNA where it nucleates assembly of the body of the 30S subunit. Its function is as follows. With S5 and S12 plays an important role in translational accuracy. The polypeptide is Small ribosomal subunit protein uS4 (Petrotoga mobilis (strain DSM 10674 / SJ95)).